The primary structure comprises 636 residues: 1-deoxy-D-xylulose-5-phosphate synthase (636 aa).

Thiamine diphosphate is bound by residues His-77 and 118–120 (GHS). Mg(2+) is bound at residue Asp-149. Residues 150–151 (GA), Asn-178, Tyr-290, and Glu-375 each bind thiamine diphosphate. Asn-178 lines the Mg(2+) pocket.

The protein belongs to the transketolase family. DXPS subfamily. As to quaternary structure, homodimer. The cofactor is Mg(2+). It depends on thiamine diphosphate as a cofactor.

The enzyme catalyses D-glyceraldehyde 3-phosphate + pyruvate + H(+) = 1-deoxy-D-xylulose 5-phosphate + CO2. The protein operates within metabolic intermediate biosynthesis; 1-deoxy-D-xylulose 5-phosphate biosynthesis; 1-deoxy-D-xylulose 5-phosphate from D-glyceraldehyde 3-phosphate and pyruvate: step 1/1. Its function is as follows. Catalyzes the acyloin condensation reaction between C atoms 2 and 3 of pyruvate and glyceraldehyde 3-phosphate to yield 1-deoxy-D-xylulose-5-phosphate (DXP). This is 1-deoxy-D-xylulose-5-phosphate synthase from Cytophaga hutchinsonii (strain ATCC 33406 / DSM 1761 / CIP 103989 / NBRC 15051 / NCIMB 9469 / D465).